A 220-amino-acid chain; its full sequence is Mediator of RNA polymerase II transcription subunit 19 (220 aa).

The segment at 171–220 (AFDLDGTGKSQSGSNSGNNSKKRKNKSSGSSMATPTHSDSHEDMKRRRLE) is disordered. Positions 178–189 (GKSQSGSNSGNN) are enriched in low complexity. Residues 208–220 (SDSHEDMKRRRLE) are compositionally biased toward basic and acidic residues.

It belongs to the Mediator complex subunit 19 family. As to quaternary structure, component of the Mediator complex, which is composed of at least 21 subunits that form three structurally distinct submodules. The Mediator head module contains MED6, MED8, MED11, SRB4/MED17, SRB5/MED18, ROX3/MED19, SRB2/MED20 and SRB6/MED22, the middle module contains MED1, MED4, NUT1/MED5, MED7, CSE2/MED9, NUT2/MED10, SRB7/MED21 and SOH1/MED31, and the tail module contains MED2, PGD1/MED3, RGR1/MED14, GAL11/MED15 and SIN4/MED16. The head and the middle modules interact directly with RNA polymerase II, whereas the elongated tail module interacts with gene-specific regulatory proteins.

The protein resides in the nucleus. Component of the Mediator complex, a coactivator involved in the regulated transcription of nearly all RNA polymerase II-dependent genes. Mediator functions as a bridge to convey information from gene-specific regulatory proteins to the basal RNA polymerase II transcription machinery. The Mediator complex, having a compact conformation in its free form, is recruited to promoters by direct interactions with regulatory proteins and serves for the assembly of a functional preinitiation complex with RNA polymerase II and the general transcription factors. The Mediator complex unfolds to an extended conformation and partially surrounds RNA polymerase II, specifically interacting with the unphosphorylated form of the C-terminal domain (CTD) of RNA polymerase II. The Mediator complex dissociates from the RNA polymerase II holoenzyme and stays at the promoter when transcriptional elongation begins. In Saccharomyces cerevisiae (strain ATCC 204508 / S288c) (Baker's yeast), this protein is Mediator of RNA polymerase II transcription subunit 19 (ROX3).